We begin with the raw amino-acid sequence, 397 residues long: Carbamoyl phosphate synthase small chain (397 aa).

Positions 1-204 (MSPLLPSFPF…PAYRTLDTSK (204 aa)) are CPSase. L-glutamine contacts are provided by Ser53, Gly256, and Gly258. The Glutamine amidotransferase type-1 domain occupies 208–395 (KVVAYDFGVK…MELMNAAKKE (188 aa)). Residue Cys284 is the Nucleophile of the active site. Positions 285, 288, 326, 328, and 329 each coordinate L-glutamine. Catalysis depends on residues His368 and Glu370.

Belongs to the CarA family. In terms of assembly, composed of two chains; the small (or glutamine) chain promotes the hydrolysis of glutamine to ammonia, which is used by the large (or ammonia) chain to synthesize carbamoyl phosphate. Tetramer of heterodimers (alpha,beta)4.

It carries out the reaction hydrogencarbonate + L-glutamine + 2 ATP + H2O = carbamoyl phosphate + L-glutamate + 2 ADP + phosphate + 2 H(+). The catalysed reaction is L-glutamine + H2O = L-glutamate + NH4(+). It participates in amino-acid biosynthesis; L-arginine biosynthesis; carbamoyl phosphate from bicarbonate: step 1/1. Its pathway is pyrimidine metabolism; UMP biosynthesis via de novo pathway; (S)-dihydroorotate from bicarbonate: step 1/3. Its function is as follows. Small subunit of the glutamine-dependent carbamoyl phosphate synthetase (CPSase). CPSase catalyzes the formation of carbamoyl phosphate from the ammonia moiety of glutamine, carbonate, and phosphate donated by ATP, constituting the first step of 2 biosynthetic pathways, one leading to arginine and/or urea and the other to pyrimidine nucleotides. The small subunit (glutamine amidotransferase) binds and cleaves glutamine to supply the large subunit with the substrate ammonia. The sequence is that of Carbamoyl phosphate synthase small chain from Polynucleobacter asymbioticus (strain DSM 18221 / CIP 109841 / QLW-P1DMWA-1) (Polynucleobacter necessarius subsp. asymbioticus).